The primary structure comprises 228 residues: 2-hydroxy-3-keto-5-methylthiopentenyl-1-phosphate phosphatase (228 aa).

It belongs to the HAD-like hydrolase superfamily. MtnX family.

The catalysed reaction is 2-hydroxy-5-methylsulfanyl-3-oxopent-1-enyl phosphate + H2O = 1,2-dihydroxy-5-(methylsulfanyl)pent-1-en-3-one + phosphate. It participates in amino-acid biosynthesis; L-methionine biosynthesis via salvage pathway; L-methionine from S-methyl-5-thio-alpha-D-ribose 1-phosphate: step 4/6. Dephosphorylates 2-hydroxy-3-keto-5-methylthiopentenyl-1-phosphate (HK-MTPenyl-1-P) yielding 1,2-dihydroxy-3-keto-5-methylthiopentene (DHK-MTPene). In Lysinibacillus sphaericus (strain C3-41), this protein is 2-hydroxy-3-keto-5-methylthiopentenyl-1-phosphate phosphatase.